The primary structure comprises 481 residues: uncharacterized protein (481 aa).

A helical membrane pass occupies residues 18-38 (FMIVTAIAVAIFVVITGVVIF).

The protein resides in the cell inner membrane. Functionally, involved in DNA conjugation in the recipient strain. This is an uncharacterized protein from Mycolicibacterium smegmatis (strain MKD8) (Mycobacterium smegmatis).